We begin with the raw amino-acid sequence, 136 residues long: Large-conductance mechanosensitive channel (136 aa).

2 helical membrane-spanning segments follow: residues 9–29 and 79–99; these read AFAS…GAAF and IQTI…VKAI.

This sequence belongs to the MscL family. In terms of assembly, homopentamer.

Its subcellular location is the cell inner membrane. In terms of biological role, channel that opens in response to stretch forces in the membrane lipid bilayer. May participate in the regulation of osmotic pressure changes within the cell. In Shewanella baltica (strain OS223), this protein is Large-conductance mechanosensitive channel.